Here is a 248-residue protein sequence, read N- to C-terminus: PF03932 family protein CutC (248 aa).

The protein belongs to the CutC family. Homodimer.

It localises to the cytoplasm. The protein is PF03932 family protein CutC of Escherichia coli O81 (strain ED1a).